A 215-amino-acid chain; its full sequence is ATP phosphoribosyltransferase (215 aa).

This sequence belongs to the ATP phosphoribosyltransferase family. Short subfamily. Heteromultimer composed of HisG and HisZ subunits.

The protein localises to the cytoplasm. It catalyses the reaction 1-(5-phospho-beta-D-ribosyl)-ATP + diphosphate = 5-phospho-alpha-D-ribose 1-diphosphate + ATP. Its pathway is amino-acid biosynthesis; L-histidine biosynthesis; L-histidine from 5-phospho-alpha-D-ribose 1-diphosphate: step 1/9. Its function is as follows. Catalyzes the condensation of ATP and 5-phosphoribose 1-diphosphate to form N'-(5'-phosphoribosyl)-ATP (PR-ATP). Has a crucial role in the pathway because the rate of histidine biosynthesis seems to be controlled primarily by regulation of HisG enzymatic activity. This Acidithiobacillus ferrooxidans (strain ATCC 23270 / DSM 14882 / CIP 104768 / NCIMB 8455) (Ferrobacillus ferrooxidans (strain ATCC 23270)) protein is ATP phosphoribosyltransferase.